The primary structure comprises 301 residues: Recombination-associated protein RdgC (301 aa).

This sequence belongs to the RdgC family.

It localises to the cytoplasm. The protein localises to the nucleoid. May be involved in recombination. This chain is Recombination-associated protein RdgC, found in Xanthomonas oryzae pv. oryzae (strain MAFF 311018).